The primary structure comprises 624 residues: Protein NRT1/ PTR FAMILY 6.1 (624 aa).

The segment at 1 to 20 (MVASEIKSPVSVPETPGSSS) is disordered. Helical transmembrane passes span 83–100 (MAYFGLSVNMVAFMFYVM) and 114–134 (FLGISQASSVLGGFLADAYLG). A Phosphothreonine modification is found at Thr-138. 10 helical membrane-spanning segments follow: residues 139–159 (IAIFTTMYLVGLIGITLGASL), 184–204 (SWQMLYLYTVLYITGFGAAGI), 230–250 (FFNFFYLSVTLGAIIAFTLVV), 258–278 (WGMAFGTLAVAMGISNALFFA), 378–398 (LIPIPTCTIMLSLVLTEYLTL), 422–442 (VFPGLSIFLILSLYYSVFVPI), 459–479 (VGIGLAVSIISVAWAGLFENY), 504–524 (WLLIQYCLIGIAEVFCIVGLL), 537–557 (SIGSAYAALAGGLGCFAATIL), and 585–605 (CLYWLLTLLSFLNFCVFLWSA).

It belongs to the major facilitator superfamily. Proton-dependent oligopeptide transporter (POT/PTR) (TC 2.A.17) family. Expressed in flower and siliques.

Its subcellular location is the membrane. The chain is Protein NRT1/ PTR FAMILY 6.1 (NPF6.1) from Arabidopsis thaliana (Mouse-ear cress).